A 104-amino-acid chain; its full sequence is uncharacterized protein (104 aa).

This is an uncharacterized protein from Acidianus two-tailed virus (ATV).